The following is a 432-amino-acid chain: DEAD-box ATP-dependent RNA helicase 56 (432 aa).

A coiled-coil region spans residues 1–28 (MAEAEVKDNEVYEEDLVDYEEEVENGTD). Residues 51-79 (SGFRDFLLKPELLRAIQDCGFEHPSEVQH) carry the Q motif motif. In terms of domain architecture, Helicase ATP-binding spans 82–255 (IPQAILGMDV…KKFMQDPMEI (174 aa)). 95-102 (AKSGMGKT) contributes to the ATP binding site. The DEAD box motif lies at 202 to 205 (DECD). Positions 283 to 428 (KLNDLLDALD…ELPEQIDTST (146 aa)) constitute a Helicase C-terminal domain.

The protein belongs to the DEAD box helicase family. DECD subfamily. In terms of assembly, homodimer and heterodimer with AIP2. Interacts with API5.

It localises to the nucleus. It carries out the reaction ATP + H2O = ADP + phosphate + H(+). Its function is as follows. ATP-binding RNA helicase involved in pre-mRNA splicing. Required for the export of mRNA out of the nucleus. Required for tapetal programmed cell death (PCD) and degeneration during anther development. Forms dimer with AIP2 and binds the promoter region of the cysteine protease CP1. Can complement the yeast RNA helicase SUB2. Plants silencing AIP1 and AIP2 are male sterile. The sequence is that of DEAD-box ATP-dependent RNA helicase 56 from Oryza sativa subsp. japonica (Rice).